Consider the following 376-residue polypeptide: Cell adhesion molecule CEACAM18 (376 aa).

Residues 1 to 30 (MDFSRPSFSPWRWLTLVASLLTCGICQASG) form the signal peptide. Residues 31 to 330 (QIFISPDSLL…PLPTVNRELY (300 aa)) are Extracellular-facing. N69, N95, and N110 each carry an N-linked (GlcNAc...) asparagine glycan. Positions 229-314 (PDYVSLWTQP…TQLTFYRDVT (86 aa)) constitute an Ig-like C2-type domain. A disulfide bridge links C257 with C298. Residues 331-351 (IPGPLVIFLILLTSLGGAFVC) form a helical membrane-spanning segment. At 352–376 (RVLVYSLFQSCSRGKTCHKCPWQTN) the chain is on the cytoplasmic side.

The protein belongs to the immunoglobulin superfamily. CEA family. As to expression, mostly expressed in the small and large intestine and at lower levels also in other organs.

It localises to the membrane. The sequence is that of Cell adhesion molecule CEACAM18 from Mus musculus (Mouse).